Reading from the N-terminus, the 446-residue chain is Probable polyamine aminopropyl transferase (446 aa).

The segment at 1 to 117 (MVEPAIGRNH…KRIACVVSAV (117 aa)) is unknown. Residues 64-94 (GRGAERWHRSPRQANGRFSNQRYSSTSPNSS) are disordered. Residues 75–94 (RQANGRFSNQRYSSTSPNSS) are compositionally biased toward polar residues. The PABS domain occupies 116-351 (AVIFVATSCV…ELFAKKPGSG (236 aa)). The spermidine synthase stretch occupies residues 118–353 (IFVATSCVSP…FAKKPGSGSE (236 aa)). S-methyl-5'-thioadenosine is bound by residues asparagine 147, glutamate 226, and 251–252 (DG). The Proton acceptor role is filled by aspartate 269.

This sequence belongs to the spermidine/spermine synthase family. Homodimer or homotetramer.

It localises to the cytoplasm. It carries out the reaction S-adenosyl 3-(methylsulfanyl)propylamine + putrescine = S-methyl-5'-thioadenosine + spermidine + H(+). Its pathway is amine and polyamine biosynthesis; spermidine biosynthesis; spermidine from putrescine: step 1/1. Functionally, catalyzes the irreversible transfer of a propylamine group from the amino donor S-adenosylmethioninamine (decarboxy-AdoMet) to putrescine (1,4-diaminobutane) to yield spermidine. The chain is Probable polyamine aminopropyl transferase (speE) from Bifidobacterium longum (strain NCC 2705).